Here is a 633-residue protein sequence, read N- to C-terminus: Micronuclear linker histone polyprotein (633 aa).

2 DNA-binding regions (HMG box) span residues 12 to 74 and 96 to 164; these read PPKK…LFHY and PKKP…KKWN. Residues 170–633 are disordered; it reads AAQKKQTKRK…AYGKKANKKQ (464 aa). Basic residues predominate over residues 174–190; the sequence is KQTKRKNSTSKSRRSSS. 2 stretches are compositionally biased toward low complexity: residues 212–224 and 253–271; these read SSAS…SSSS and NSTS…SSSS. Basic residues-rich tracts occupy residues 272–309 and 330–352; these read KNKK…RKSS and SNKR…RKSS. 2 stretches are compositionally biased toward basic and acidic residues: residues 353 to 374 and 382 to 401; these read KSQE…EGQK and AKRD…EART. The segment covering 406–416 has biased composition (low complexity); the sequence is NKSASKASKSG. A compositionally biased stretch (basic residues) spans 417-444; the sequence is SKSKGKSASKSKGKSSSKGKNSKSRSAS. Polar residues predominate over residues 446-469; it reads PKSNAAQNSNNTHQTADSSENASS. A compositionally biased stretch (basic and acidic residues) spans 478–491; that stretch reads RQREQKDMVNEKSN. Residues 496 to 524 are compositionally biased toward basic residues; sequence SKGKKNSKSNTRSKSKSKSASKSRKNASK. 2 stretches are compositionally biased toward basic and acidic residues: residues 540-550 and 559-612; these read SRSESKSKSEA and EVIE…EDSK.

All four histones are processed from the precursor molecule. Post-translationally, phosphorylated in growing and dividing cells but not in nongrowing (starved) cells. In terms of processing, the N-terminus of MIC LH-alpha and MIC LH-delta is blocked.

Its subcellular location is the nucleus. The protein localises to the chromosome. This chain is Micronuclear linker histone polyprotein (MLH), found in Tetrahymena thermophila (strain SB210).